The sequence spans 930 residues: MNSVRAANRRPRRVSRPRPVQQQQQQPPQQPPPQPPQQQPPPQPPQQPPQQQPPPPPQQQPPPPPPPPPPPPQDRNNAGERDDVPADMVAEESGPGAQNSPYQLRRKTLLPKRTACPTKSSMEGASTSTTENFGHRAKRARVSGKSQDLSAAPAEQYLQEKLPDEVVLKIFSYLLEQDLCRAACVCKRFSELANDPILWKRLYMEVFEYTRPMMHPEPGKFYQINPEEYEHPNPWKESFQQLYKGAHVKPGFAEHFYSNPARYKGRENMLYYDTIEDALGGVQEAHFDGLIFVHSGIYTDEWIYIESPITMIGAAPGKVADKVIIENTRDSTFVFMEGSEDAYVGYMTIRFNPDDKSAQHHNAHHCLEITVNCSPIIDHCIIRSTCTVGSAVCVSGQGACPTIKHCNISDCENVGLYITDHAQGIYEDNEISNNALAGIWVKNHGNPIIRRNHIHHGRDVGVFTFDHGMGYFESCNIHRNRIAGFEVKAYANPTVVRCEIHHGQTGGIYVHEKGRGQFIENKIYANNFAGVWITSNSDPTIRGNSIFNGNQGGVYIFGDGRGLIEGNDIYGNALAGIQIRTNSCPIVRHNKIHDGQHGGIYVHEKGQGVIEENEVYSNTLAGVWVTTGSTPVLRRNRIHSGKQVGVYFYDNGHGVLEDNDIYNHMYSGVQIRTGSNPKIRRNKIWGGQNGGILVYNSGLGCIEDNEIFDNAMAGVWIKTDSNPTLRRNKIHDGRDGGICIFNGGRGLLEENDIFRNAQAGVLISTNSHPVLRKNRIFDGFAAGIEITNHATATLEGNQIFNNRFGGLFLASGVNVTMKDNKIMNNQDAIEKAVSRGQCLYKISSYTSYPMHDFYRCHTCNTTDRNAICVNCIKKCHQGHDVEFIRHDRFFCDCGAGTLSNPCTLAGEPTHDTDTLYDSAPPIESNTLQHN.

Residues 1 to 150 form a disordered region; it reads MNSVRAANRR…RVSGKSQDLS (150 aa). Residues 7–16 are compositionally biased toward basic residues; it reads ANRRPRRVSR. Residues 17-27 show a composition bias toward low complexity; the sequence is PRPVQQQQQQP. The span at 28-73 shows a compositional bias: pro residues; that stretch reads PQQPPPQPPQQQPPPQPPQQPPQQQPPPPPQQQPPPPPPPPPPPPQ. Over residues 117–132 the composition is skewed to polar residues; it reads PTKSSMEGASTSTTEN. One can recognise an F-box domain in the interval 156 to 202; it reads QYLQEKLPDEVVLKIFSYLLEQDLCRAACVCKRFSELANDPILWKRL. PbH1 repeat units lie at residues 398-420, 421-443, 444-466, 467-489, 490-512, 513-535, 536-558, 559-581, 582-604, 605-627, 628-650, 651-673, 674-696, 697-719, 720-742, 743-765, 766-788, 789-811, and 812-833; these read GACPTIKHCNISDCENVGLYITD, HAQGIYEDNEISNNALAGIWVKN, HGNPIIRRNHIHHGRDVGVFTFD, HGMGYFESCNIHRNRIAGFEVKA, YANPTVVRCEIHHGQTGGIYVHE, KGRGQFIENKIYANNFAGVWITS, NSDPTIRGNSIFNGNQGGVYIFG, DGRGLIEGNDIYGNALAGIQIRT, NSCPIVRHNKIHDGQHGGIYVHE, KGQGVIEENEVYSNTLAGVWVTT, GSTPVLRRNRIHSGKQVGVYFYD, NGHGVLEDNDIYNHMYSGVQIRT, GSNPKIRRNKIWGGQNGGILVYN, SGLGCIEDNEIFDNAMAGVWIKT, DSNPTLRRNKIHDGRDGGICIFN, GGRGLLEENDIFRNAQAGVLIST, NSHPVLRKNRIFDGFAAGIEITN, HATATLEGNQIFNNRFGGLFLAS, and GVNVTMKDNKIMNNQDAIEKAV. The UBR-type zinc-finger motif lies at 836 to 907; the sequence is GQCLYKISSY…LSNPCTLAGE (72 aa).

Component of the SCF(FBXO11) complex consisting of CUL1, RBX1, SKP1 and FBXO11. Interacts with CIITA. At 9.5 dpc and 10.5 dpc, expression is restricted to developing heart tissue. By 11.5 dpc and 12.5 dpc, detected in liver and subsequently in muscle by 13.5 dpc. At 14.5 dpc, still detected in heart, liver and muscle and also in the developing secondary palate including the nasal, medial and oral epithelia of the palatal shelves. At 15.5 dpc and 16.5 dpc, expressed in lung, kidney, heart, liver, muscle and adrenal gland. At this time, fusion of the palate shelves has occurred, with expression confined to the nasal and oral epithelia. At 17.5 dpc, expression in the lung is confined to bronchial epithelial cells and is evident in bone marrow, skin, tissue macrophages, osteoblasts, kidney, liver and spleen. At 18.5 dpc, expressed in bone marrow, liver, kidney and muscle but decreases in heart and lung. At this time, first detected in the middle ear epithelium. At the newborn stage, expression is strong in the middle ear where it is confined to mucin-secreting cells, as well as persisting in bone marrow, kidney and liver. Middle ear expression persists in postnatal head tissue at 4 and 13 days after birth and has declined by 21 days after birth. In the adult, expression is seen in alveolar macrophages of the lung, glomeruli and collecting tubules of the kidney, midbrain, heart and muscle.

Its subcellular location is the nucleus. It is found in the chromosome. It participates in protein modification; protein ubiquitination. Its function is as follows. Substrate recognition component of a SCF (SKP1-CUL1-F-box protein) E3 ubiquitin-protein ligase complex which mediates the ubiquitination and subsequent proteasomal degradation of target proteins, such as DTL/CDT2, BCL6, SNAI1 and PRDM1/BLIMP1. The SCF(FBXO11) complex mediates ubiquitination and degradation of BCL6, thereby playing a role in the germinal center B-cells terminal differentiation toward memory B-cells and plasma cells. The SCF(FBXO11) complex also mediates ubiquitination and degradation of DTL, an important step for the regulation of TGF-beta signaling, cell migration and the timing of the cell-cycle progression and exit. The SCF(FBXO11) complex also catalyzes ubiquitination and degradation of GSK3B-phosphorylated SNAI1. Binds to and neddylates phosphorylated p53/TP53, inhibiting its transcriptional activity. Plays a role in the regulatiom of erythropoiesis but not myelopoiesis or megakaryopoiesis. Mechanistically, activates erythroid genes by mediating the degradation of BAHD1, a heterochromatin-associated protein that recruits corepressors to H3K27me3 marks. Participates in macrophage cell death and inflammation in response to bacterial toxins by regulating the expression of complement 5a receptor 1/C5AR1 and IL-1beta. Acts as a critical regulator to determine the level of MHC-II by mediating the recognition of degron at the P/S/T domain of CIITA leading to its ubiquitination and subsequent degradation via the proteasome. Participates in the antiviral repsonse by initiating the activation of TBK1-IRF3-IFN-I axis. Mediates the 'Lys-63'-linked ubiquitination of TRAF3 to strengthen the interaction between TRAF3 and TBK1. The polypeptide is F-box only protein 11 (Mus musculus (Mouse)).